The chain runs to 240 residues: 4-hydroxy-tetrahydrodipicolinate reductase (240 aa).

Residues Ala-79–Thr-81 and Ser-103–Met-106 contribute to the NAD(+) site. His-135 serves as the catalytic Proton donor/acceptor. Position 136 (His-136) interacts with (S)-2,3,4,5-tetrahydrodipicolinate. Lys-139 functions as the Proton donor in the catalytic mechanism. Gly-145–Thr-146 lines the (S)-2,3,4,5-tetrahydrodipicolinate pocket.

Belongs to the DapB family.

It is found in the cytoplasm. The catalysed reaction is (S)-2,3,4,5-tetrahydrodipicolinate + NAD(+) + H2O = (2S,4S)-4-hydroxy-2,3,4,5-tetrahydrodipicolinate + NADH + H(+). It catalyses the reaction (S)-2,3,4,5-tetrahydrodipicolinate + NADP(+) + H2O = (2S,4S)-4-hydroxy-2,3,4,5-tetrahydrodipicolinate + NADPH + H(+). It participates in amino-acid biosynthesis; L-lysine biosynthesis via DAP pathway; (S)-tetrahydrodipicolinate from L-aspartate: step 4/4. Its function is as follows. Catalyzes the conversion of 4-hydroxy-tetrahydrodipicolinate (HTPA) to tetrahydrodipicolinate. The sequence is that of 4-hydroxy-tetrahydrodipicolinate reductase from Staphylococcus saprophyticus subsp. saprophyticus (strain ATCC 15305 / DSM 20229 / NCIMB 8711 / NCTC 7292 / S-41).